The sequence spans 164 residues: 3-isopropylmalate dehydratase small subunit (164 aa).

It belongs to the LeuD family. LeuD type 2 subfamily. Heterodimer of LeuC and LeuD.

The enzyme catalyses (2R,3S)-3-isopropylmalate = (2S)-2-isopropylmalate. The protein operates within amino-acid biosynthesis; L-leucine biosynthesis; L-leucine from 3-methyl-2-oxobutanoate: step 2/4. In terms of biological role, catalyzes the isomerization between 2-isopropylmalate and 3-isopropylmalate, via the formation of 2-isopropylmaleate. This is 3-isopropylmalate dehydratase small subunit from Lachnospira eligens (strain ATCC 27750 / DSM 3376 / VPI C15-48 / C15-B4) (Eubacterium eligens).